We begin with the raw amino-acid sequence, 525 residues long: GMP synthase [glutamine-hydrolyzing] (525 aa).

Positions 9-207 (RILILDFGSQ…VRDICQCEAL (199 aa)) constitute a Glutamine amidotransferase type-1 domain. The active-site Nucleophile is Cys86. Active-site residues include His181 and Glu183. Residues 208–400 (WTPAKIIDDA…LGLPYDMLYR (193 aa)) form the GMPS ATP-PPase domain. 235–241 (SGGVDSS) contributes to the ATP binding site.

Homodimer.

It catalyses the reaction XMP + L-glutamine + ATP + H2O = GMP + L-glutamate + AMP + diphosphate + 2 H(+). It functions in the pathway purine metabolism; GMP biosynthesis; GMP from XMP (L-Gln route): step 1/1. In terms of biological role, catalyzes the synthesis of GMP from XMP. This chain is GMP synthase [glutamine-hydrolyzing], found in Shigella flexneri.